Here is a 66-residue protein sequence, read N- to C-terminus: Large ribosomal subunit protein uL29 (66 aa).

The protein belongs to the universal ribosomal protein uL29 family.

The chain is Large ribosomal subunit protein uL29 from Ruegeria pomeroyi (strain ATCC 700808 / DSM 15171 / DSS-3) (Silicibacter pomeroyi).